The primary structure comprises 220 residues: Glycerol-3-phosphate acyltransferase (220 aa).

The next 6 membrane-spanning stretches (helical) occupy residues 11-31 (INVIFTLLGYLIGGIPFGYAL), 70-90 (LLVLILDLFKGMFAVFLSKLF), 96-116 (LQWMVAIASILGHCYSPFLNF), 127-147 (GSVVLLIPIESLIGLTVWFFV), 153-173 (ISSLASILGVGTATVLIFFVP), and 193-213 (MVLIFIFTLIKHAGNIFNLLA).

This sequence belongs to the PlsY family. In terms of assembly, probably interacts with PlsX.

It localises to the cell inner membrane. The catalysed reaction is an acyl phosphate + sn-glycerol 3-phosphate = a 1-acyl-sn-glycero-3-phosphate + phosphate. It functions in the pathway lipid metabolism; phospholipid metabolism. Its function is as follows. Catalyzes the transfer of an acyl group from acyl-phosphate (acyl-PO(4)) to glycerol-3-phosphate (G3P) to form lysophosphatidic acid (LPA). This enzyme utilizes acyl-phosphate as fatty acyl donor, but not acyl-CoA or acyl-ACP. The sequence is that of Glycerol-3-phosphate acyltransferase from Helicobacter pylori (strain HPAG1).